The sequence spans 200 residues: MRDLTPRQEEILNLIREWIDTTGSPPTRAEIAQHFGFSSPNAAEQHLKTLAKKGALELVSGASRGIRLPGGGGLAVVGQVAAGSPILAQENIERHVQVDTALFSPRADYLLKVRGQSMKDIGILDGDLLAVHRSAEARAGQVVVARIGDEVTVKRFQKRGHTVQLLPENADFEPIVVDLKRQELVIEGIAVGVIRSGRSL.

Residues 28 to 48 (RAEIAQHFGFSSPNAAEQHLK) constitute a DNA-binding region (H-T-H motif). Residues Ser117 and Lys154 each act as for autocatalytic cleavage activity in the active site.

The protein belongs to the peptidase S24 family. In terms of assembly, homodimer.

It catalyses the reaction Hydrolysis of Ala-|-Gly bond in repressor LexA.. Functionally, represses a number of genes involved in the response to DNA damage (SOS response), including recA and lexA. In the presence of single-stranded DNA, RecA interacts with LexA causing an autocatalytic cleavage which disrupts the DNA-binding part of LexA, leading to derepression of the SOS regulon and eventually DNA repair. The chain is LexA repressor from Thiobacillus denitrificans (strain ATCC 25259 / T1).